The following is a 121-amino-acid chain: Small ribosomal subunit protein uS13 (121 aa).

Positions Gly-94–Lys-121 are disordered. The span at Ala-106 to Lys-121 shows a compositional bias: basic residues.

This sequence belongs to the universal ribosomal protein uS13 family. As to quaternary structure, part of the 30S ribosomal subunit. Forms a loose heterodimer with protein S19. Forms two bridges to the 50S subunit in the 70S ribosome.

Functionally, located at the top of the head of the 30S subunit, it contacts several helices of the 16S rRNA. In the 70S ribosome it contacts the 23S rRNA (bridge B1a) and protein L5 of the 50S subunit (bridge B1b), connecting the 2 subunits; these bridges are implicated in subunit movement. Contacts the tRNAs in the A and P-sites. This is Small ribosomal subunit protein uS13 from Geobacillus kaustophilus (strain HTA426).